The chain runs to 182 residues: Adenine phosphoribosyltransferase (182 aa).

The protein belongs to the purine/pyrimidine phosphoribosyltransferase family. Homodimer.

The protein localises to the cytoplasm. The enzyme catalyses AMP + diphosphate = 5-phospho-alpha-D-ribose 1-diphosphate + adenine. It participates in purine metabolism; AMP biosynthesis via salvage pathway; AMP from adenine: step 1/1. In terms of biological role, catalyzes a salvage reaction resulting in the formation of AMP, that is energically less costly than de novo synthesis. The polypeptide is Adenine phosphoribosyltransferase (Campylobacter fetus subsp. fetus (strain 82-40)).